Consider the following 181-residue polypeptide: Large ribosomal subunit protein uL5 (181 aa).

Belongs to the universal ribosomal protein uL5 family. Part of the 50S ribosomal subunit; part of the 5S rRNA/L5/L18/L25 subcomplex. Contacts the 5S rRNA and the P site tRNA. Forms a bridge to the 30S subunit in the 70S ribosome.

In terms of biological role, this is one of the proteins that bind and probably mediate the attachment of the 5S RNA into the large ribosomal subunit, where it forms part of the central protuberance. In the 70S ribosome it contacts protein S13 of the 30S subunit (bridge B1b), connecting the 2 subunits; this bridge is implicated in subunit movement. Contacts the P site tRNA; the 5S rRNA and some of its associated proteins might help stabilize positioning of ribosome-bound tRNAs. This Sulfurimonas denitrificans (strain ATCC 33889 / DSM 1251) (Thiomicrospira denitrificans (strain ATCC 33889 / DSM 1251)) protein is Large ribosomal subunit protein uL5.